Reading from the N-terminus, the 390-residue chain is Chorismate synthase 2 (390 aa).

Positions 39 and 45 each coordinate NADP(+). Residues 132 to 134 (RSS), 253 to 254 (NA), glycine 298, 313 to 317 (KPIPT), and arginine 339 contribute to the FMN site.

The protein belongs to the chorismate synthase family. As to quaternary structure, homotetramer. It depends on FMNH2 as a cofactor.

It carries out the reaction 5-O-(1-carboxyvinyl)-3-phosphoshikimate = chorismate + phosphate. It functions in the pathway metabolic intermediate biosynthesis; chorismate biosynthesis; chorismate from D-erythrose 4-phosphate and phosphoenolpyruvate: step 7/7. Catalyzes the anti-1,4-elimination of the C-3 phosphate and the C-6 proR hydrogen from 5-enolpyruvylshikimate-3-phosphate (EPSP) to yield chorismate, which is the branch point compound that serves as the starting substrate for the three terminal pathways of aromatic amino acid biosynthesis. This reaction introduces a second double bond into the aromatic ring system. This Bacillus thuringiensis (strain Al Hakam) protein is Chorismate synthase 2.